The chain runs to 1321 residues: Bile salt export pump (1321 aa).

Topologically, residues 1–62 are cytoplasmic; it reads MSDSVILRSV…FSSSKDNWLM (62 aa). Residues 62-385 form the ABC transmembrane type-1 1 domain; that stretch reads MFMGSVCALL…ASSCLEIFST (324 aa). The chain crosses the membrane as a helical span at residues 63–83; sequence FMGSVCALLHGMAQPGMIIVF. Over 84 to 147 the chain is Extracellular; it reads GILTDIFVEY…VIKFSGIYAG (64 aa). N-linked (GlcNAc...) asparagine glycosylation is found at Asn109, Asn116, Asn122, and Asn125. Residues 148–168 form a helical membrane-spanning segment; the sequence is VGVAVLILGYFQIRLWVITGA. The Cytoplasmic portion of the chain corresponds to 169 to 215; that stretch reads RQIRKMRKFYFRRIMRMEIGWFDCTSVGELNSRFSDDINKIDEAIAD. The helical transmembrane segment at 216 to 236 threads the bilayer; it reads QMALFLQRLSTALSGLLLGFY. Residues 237–240 lie on the Extracellular side of the membrane; sequence RGWK. Residues 241–261 form a helical membrane-spanning segment; sequence LTLVILAVSPLIGIGAAVIGL. Over 262–319 the chain is Cytoplasmic; that stretch reads SVAKFTELELKAYAKAGSIADEVLSSIRTVAAFGGENKEVERYEKNLMFAQRWGIWKG. Residues 320 to 340 traverse the membrane as a helical segment; that stretch reads MVMGFFTGYMWCLIFFCYALA. The Extracellular portion of the chain corresponds to 341 to 353; sequence FWYGSRLVLDEGE. Residues 354 to 374 traverse the membrane as a helical segment; it reads YTPGTLIQIFLCVIIAAMNIG. Residues 375 to 755 lie on the Cytoplasmic side of the membrane; the sequence is NASSCLEIFS…KYNISEWPYI (381 aa). The ABC transporter 1 domain maps to 420–656; sequence IEFHNVTFHY…KGVYFMLVTL (237 aa). 455–462 serves as a coordination point for ATP; that stretch reads GSSGAGKS. Thr586 carries the post-translational modification Phosphothreonine. Ser587 is modified (phosphoserine). Positions 651 to 674 are interaction with HAX1; it reads FMLVTLQSQEDNTHKETGIKGKDT. Residues 662-684 are compositionally biased toward basic and acidic residues; that stretch reads NTHKETGIKGKDTTEGDTPERTF. The interval 662–722 is disordered; the sequence is NTHKETGIKG…PLAIGDHKSS (61 aa). Phosphoserine occurs at positions 692, 703, and 706. In terms of domain architecture, ABC transmembrane type-1 2 spans 755–1043; the sequence is ILVGALCAAI…TFSYTPSYAK (289 aa). Residues 756–776 form a helical membrane-spanning segment; sequence LVGALCAAINGAVTPIYSLLF. Over 777 to 794 the chain is Extracellular; that stretch reads SQILKTFSLVDKEQQRSE. The chain crosses the membrane as a helical span at residues 795–815; it reads IYSMCLFFVILGCVSLFTQFL. Topologically, residues 816-869 are cytoplasmic; it reads QGYNFAKSGELLTKRLRKFGFKAMLRQDIGWFDDLKNNPGVLTTRLATDASQVQ. A run of 2 helical transmembrane segments spans residues 870–890 and 891–911; these read GATG…FVAV and LIAF…FPFL. Topologically, residues 912–979 are cytoplasmic; it reads ALSGAVQTKM…SYKTAIRKAN (68 aa). The chain crosses the membrane as a helical span at residues 980–1000; it reads VYGLCYAFSQGISFLANSAAY. The Extracellular portion of the chain corresponds to 1001 to 1011; that stretch reads RYGGYLIVYED. The helical transmembrane segment at 1012-1032 threads the bilayer; sequence LNFSYVFRVVSSIAMSATAVG. Residues 1033-1321 lie on the Cytoplasmic side of the membrane; sequence RTFSYTPSYA…KLVITGAPIS (289 aa). The region spanning 1078–1316 is the ABC transporter 2 domain; that stretch reads IDFIDCKFTY…KGAYYKLVIT (239 aa). Position 1113–1120 (1113–1120) interacts with ATP; sequence GSSGCGKS. Ser1321 carries the post-translational modification Phosphoserine.

The protein belongs to the ABC transporter superfamily. ABCB family. Multidrug resistance exporter (TC 3.A.1.201) subfamily. In terms of assembly, interacts with HAX1. Interacts with the adapter protein complex 2 (AP-2) throught AP2A2 or AP2A1; this interaction regulates cell membrane expression of ABCB11 through its internalization in a clathrin-dependent manner and its subsequent degradation. In terms of processing, N-glycosylated. Post-translationally, ubiquitinated; short-chain ubiquitination regulates cell-Surface expression of ABCB11. Expressed predominantly, if not exclusively in the liver, where it was further localized to the canalicular microvilli and to subcanalicular vesicles of the hepatocytes by in situ.

It localises to the apical cell membrane. The protein localises to the recycling endosome membrane. The protein resides in the endosome. It is found in the cell membrane. It catalyses the reaction cholate(in) + ATP + H2O = cholate(out) + ADP + phosphate + H(+). The enzyme catalyses taurocholate(in) + ATP + H2O = taurocholate(out) + ADP + phosphate + H(+). It carries out the reaction glycocholate(in) + ATP + H2O = glycocholate(out) + ADP + phosphate + H(+). The catalysed reaction is glycochenodeoxycholate(in) + ATP + H2O = glycochenodeoxycholate(out) + ADP + phosphate + H(+). It catalyses the reaction taurochenodeoxycholate(in) + ATP + H2O = taurochenodeoxycholate(out) + ADP + phosphate + H(+). The enzyme catalyses glycoursodeoxycholate(in) + ATP + H2O = glycoursodeoxycholate(out) + ADP + phosphate + H(+). It carries out the reaction tauroursodeoxycholate(in) + ATP + H2O = tauroursodeoxycholate(out) + ADP + phosphate + H(+). The catalysed reaction is taurodeoxycholate(in) + ATP + H2O = taurodeoxycholate(out) + ADP + phosphate + H(+). It catalyses the reaction taurolithocholate 3-sulfate(in) + ATP + H2O = taurolithocholate 3-sulfate(out) + ADP + phosphate + H(+). The enzyme catalyses pravastatin(in) + ATP + H2O = pravastatin(out) + ADP + phosphate + H(+). With respect to regulation, the uptake of taurocholate is inhibited by taurolithocholate sulfate with an IC(50) of 9 uM. Pravastatin competitively inhibits the transport of taurocholic acid. Cyclosporin A, glibenclamide, rifampicin and troglitazonestrongly competitively inhibit the transport activity of taurocholate. The canalicular transport activity of taurocholate is strongly dependent on canalicular membrane cholesterol content. The uptake of taurocholate is increased by short- and medium-chain fatty acids. Cholesterol increases transport capacity of taurocholate without affecting the affinity for the substrate. Catalyzes the transport of the major hydrophobic bile salts, such as taurine and glycine-conjugated cholic acid across the canalicular membrane of hepatocytes in an ATP-dependent manner, therefore participates in hepatic bile acid homeostasis and consequently to lipid homeostasis through regulation of biliary lipid secretion in a bile salts dependent manner. Transports taurine-conjugated bile salts more rapidly than glycine-conjugated bile salts. Also transports non-bile acid compounds, such as pravastatin and fexofenadine in an ATP-dependent manner and may be involved in their biliary excretion. This Mus musculus (Mouse) protein is Bile salt export pump.